Reading from the N-terminus, the 292-residue chain is HTH-type transcriptional regulator BlaA (292 aa).

Residues 5–62 (LPLNALRAFEASARHLNFTKAALELYVTQGAVSQQVRMLEERLGVILFKRLPRGLEMT) form the HTH lysR-type domain. The H-T-H motif DNA-binding region spans 22–41 (FTKAALELYVTQGAVSQQVR).

The protein belongs to the LysR transcriptional regulatory family.

In terms of biological role, positive regulator of the expression of the gene (blaB) for beta-lactamase. The sequence is that of HTH-type transcriptional regulator BlaA (blaA) from Proteus vulgaris.